The sequence spans 189 residues: Probable nicotinate-nucleotide adenylyltransferase (189 aa).

The protein belongs to the NadD family.

It carries out the reaction nicotinate beta-D-ribonucleotide + ATP + H(+) = deamido-NAD(+) + diphosphate. It participates in cofactor biosynthesis; NAD(+) biosynthesis; deamido-NAD(+) from nicotinate D-ribonucleotide: step 1/1. Its function is as follows. Catalyzes the reversible adenylation of nicotinate mononucleotide (NaMN) to nicotinic acid adenine dinucleotide (NaAD). This is Probable nicotinate-nucleotide adenylyltransferase from Bacillus mycoides (strain KBAB4) (Bacillus weihenstephanensis).